The chain runs to 393 residues: Probable acetyl-CoA acetyltransferase (393 aa).

Residue Thr2 is a propeptide, removed; alternate. Catalysis depends on Cys88, which acts as the Acyl-thioester intermediate. Residues His349 and Cys379 each act as proton acceptor in the active site.

The protein belongs to the thiolase-like superfamily. Thiolase family.

It catalyses the reaction 2 acetyl-CoA = acetoacetyl-CoA + CoA. In Mycobacterium tuberculosis (strain ATCC 25618 / H37Rv), this protein is Probable acetyl-CoA acetyltransferase (fadA4).